The chain runs to 236 residues: Phosphoribosylaminoimidazole-succinocarboxamide synthase (236 aa).

Belongs to the SAICAR synthetase family.

The enzyme catalyses 5-amino-1-(5-phospho-D-ribosyl)imidazole-4-carboxylate + L-aspartate + ATP = (2S)-2-[5-amino-1-(5-phospho-beta-D-ribosyl)imidazole-4-carboxamido]succinate + ADP + phosphate + 2 H(+). It functions in the pathway purine metabolism; IMP biosynthesis via de novo pathway; 5-amino-1-(5-phospho-D-ribosyl)imidazole-4-carboxamide from 5-amino-1-(5-phospho-D-ribosyl)imidazole-4-carboxylate: step 1/2. This chain is Phosphoribosylaminoimidazole-succinocarboxamide synthase, found in Cellvibrio japonicus (strain Ueda107) (Pseudomonas fluorescens subsp. cellulosa).